Consider the following 126-residue polypeptide: Holo-[acyl-carrier-protein] synthase (126 aa).

2 residues coordinate Mg(2+): aspartate 8 and glutamate 57.

This sequence belongs to the P-Pant transferase superfamily. AcpS family. Mg(2+) serves as cofactor.

Its subcellular location is the cytoplasm. The catalysed reaction is apo-[ACP] + CoA = holo-[ACP] + adenosine 3',5'-bisphosphate + H(+). Functionally, transfers the 4'-phosphopantetheine moiety from coenzyme A to a Ser of acyl-carrier-protein. The polypeptide is Holo-[acyl-carrier-protein] synthase (Geobacter metallireducens (strain ATCC 53774 / DSM 7210 / GS-15)).